The primary structure comprises 134 residues: L-ectoine synthase (134 aa).

The protein belongs to the ectoine synthase family.

The enzyme catalyses (2S)-4-acetamido-2-aminobutanoate = L-ectoine + H2O. Its pathway is amine and polyamine biosynthesis; ectoine biosynthesis; L-ectoine from L-aspartate 4-semialdehyde: step 3/3. Functionally, catalyzes the circularization of gamma-N-acetyl-alpha,gamma-diaminobutyric acid (ADABA) to ectoine (1,4,5,6-tetrahydro-2-methyl-4-pyrimidine carboxylic acid), which is an excellent osmoprotectant. The sequence is that of L-ectoine synthase from Thermobifida fusca (strain YX).